Reading from the N-terminus, the 473-residue chain is Asparagine--tRNA ligase (473 aa).

This sequence belongs to the class-II aminoacyl-tRNA synthetase family. As to quaternary structure, homodimer.

Its subcellular location is the cytoplasm. The enzyme catalyses tRNA(Asn) + L-asparagine + ATP = L-asparaginyl-tRNA(Asn) + AMP + diphosphate + H(+). This Treponema denticola (strain ATCC 35405 / DSM 14222 / CIP 103919 / JCM 8153 / KCTC 15104) protein is Asparagine--tRNA ligase.